The chain runs to 115 residues: Cobalt-zinc-cadmium resistance protein CzcI (115 aa).

The N-terminal stretch at 1-20 is a signal peptide; sequence MRRFVLIFVLLILPFQFSWA. A compositionally biased stretch (polar residues) spans 93–102; the sequence is QHSSEFSSLN. A disordered region spans residues 93–115; the sequence is QHSSEFSSLNARAPDRPQWQRLA.

Its subcellular location is the periplasm. Its function is as follows. Component of the czc cation-efflux system that confers resistance to cobalt, zinc and cadmium. May have a regulatory function. The polypeptide is Cobalt-zinc-cadmium resistance protein CzcI (czcI) (Cupriavidus metallidurans (strain ATCC 43123 / DSM 2839 / NBRC 102507 / CH34) (Ralstonia metallidurans)).